Consider the following 115-residue polypeptide: Large ribosomal subunit protein bL35m (115 aa).

Belongs to the bacterial ribosomal protein bL35 family.

It is found in the mitochondrion. This is Large ribosomal subunit protein bL35m from Saccharomyces cerevisiae (strain YJM789) (Baker's yeast).